We begin with the raw amino-acid sequence, 940 residues long: Isoleucine--tRNA ligase (940 aa).

Residues 58–68 (PYANGNIHIGH) carry the 'HIGH' region motif. Glu-563 serves as a coordination point for L-isoleucyl-5'-AMP. Positions 604-608 (KMSKS) match the 'KMSKS' region motif. Lys-607 contacts ATP. The Zn(2+) site is built by Cys-903, Cys-906, Cys-923, and Cys-926.

It belongs to the class-I aminoacyl-tRNA synthetase family. IleS type 1 subfamily. As to quaternary structure, monomer. Zn(2+) is required as a cofactor.

The protein resides in the cytoplasm. The enzyme catalyses tRNA(Ile) + L-isoleucine + ATP = L-isoleucyl-tRNA(Ile) + AMP + diphosphate. In terms of biological role, catalyzes the attachment of isoleucine to tRNA(Ile). As IleRS can inadvertently accommodate and process structurally similar amino acids such as valine, to avoid such errors it has two additional distinct tRNA(Ile)-dependent editing activities. One activity is designated as 'pretransfer' editing and involves the hydrolysis of activated Val-AMP. The other activity is designated 'posttransfer' editing and involves deacylation of mischarged Val-tRNA(Ile). The protein is Isoleucine--tRNA ligase of Buchnera aphidicola subsp. Acyrthosiphon pisum (strain APS) (Acyrthosiphon pisum symbiotic bacterium).